A 463-amino-acid polypeptide reads, in one-letter code: Chromogranin-A (463 aa).

A signal peptide spans 1–18 (MRSTAVLALLLCAGQVFA). Cysteines 35 and 56 form a disulfide. Positions 88 to 440 (KERAQQPLKQ…ANRRAEDQEL (353 aa)) are disordered. Positions 92–116 (QQPLKQQQPPKQQQQQQQQQQQEQQ) are enriched in low complexity. Residue Ser-119 is modified to Phosphoserine. The segment covering 134–160 (DAKHRDAAAEVPSRDTMEKRKDSDKGQ) has biased composition (basic and acidic residues). Residues 196-208 (TATNTQSPTSLPS) are compositionally biased toward polar residues. A phosphoserine mark is found at Ser-220, Ser-282, and Ser-308. Residues 301–310 (GKGELEHSQQ) are compositionally biased toward basic and acidic residues. Gly-329 carries the post-translational modification Glycine amide. Composition is skewed to basic and acidic residues over residues 331-340 (KGRELEHKQE) and 348-375 (RLSR…KRLE). A phosphoserine mark is found at Ser-350 and Ser-383. Met-384 is modified (methionine sulfoxide). The span at 409 to 437 (SSREDSVEARSDFEEKKEEEGSANRRAED) shows a compositional bias: basic and acidic residues. Ser-410, Ser-414, and Ser-430 each carry phosphoserine. Ser-430 carries O-linked (Xyl...) (chondroitin sulfate) serine glycosylation. Gln-438 is modified (pyrrolidone carboxylic acid). Ser-444 carries the phosphoserine modification.

Belongs to the chromogranin/secretogranin protein family. As to quaternary structure, self-interacts; self-assembly is promoted in vitro by chondroitin sulfate attachment which occurs at mildly acidic pH conditions. Interacts with SCG3; this interaction is optimal in conditions mimicking the lumenal milieu of the trans-Golgi network, i.e. pH 5.5 and 10 mM Ca(+2). Interacts with ITPR1 in the secretory granules. In terms of processing, O-glycosylated; contains chondroitin sulfate (CS). CS attachment is pH-dependent, being observed at mildly acidic conditions of pH 5 but not at neutral pH, and promotes self-assembly in vitro.

Its subcellular location is the cytoplasmic vesicle. It is found in the secretory vesicle. It localises to the neuronal dense core vesicle. The protein localises to the secreted. Strongly inhibits glucose induced insulin release from the pancreas. Its function is as follows. Inhibits catecholamine release from chromaffin cells and noradrenergic neurons by acting as a non-competitive nicotinic cholinergic antagonist. Can induce mast cell migration, degranulation and production of cytokines and chemokines. Functionally, regulates granule biogenesis in endocrine cells by up-regulating the transcription of protease nexin 1 (SERPINE2) via a cAMP-PKA-SP1 pathway. This leads to inhibition of granule protein degradation in the Golgi complex which in turn promotes granule formation. Pyroglutaminated (pGlu)-serpinin exerts an antiapoptotic effect on cells exposed to oxidative stress. This is Chromogranin-A (Chga) from Mus musculus (Mouse).